The sequence spans 237 residues: tRNA1(Val) (adenine(37)-N6)-methyltransferase (237 aa).

Belongs to the methyltransferase superfamily. tRNA (adenine-N(6)-)-methyltransferase family.

It localises to the cytoplasm. It carries out the reaction adenosine(37) in tRNA1(Val) + S-adenosyl-L-methionine = N(6)-methyladenosine(37) in tRNA1(Val) + S-adenosyl-L-homocysteine + H(+). In terms of biological role, specifically methylates the adenine in position 37 of tRNA(1)(Val) (anticodon cmo5UAC). The sequence is that of tRNA1(Val) (adenine(37)-N6)-methyltransferase from Tolumonas auensis (strain DSM 9187 / NBRC 110442 / TA 4).